Here is a 277-residue protein sequence, read N- to C-terminus: Lectin 1 (277 aa).

Residues 1–30 (MSFSSSNFYVILSISLTVFILLFNINKVNS) form the signal peptide. Asn143 carries an N-linked (GlcNAc...) asparagine glycan. Residues Glu152 and Asp154 each contribute to the Mn(2+) site. Asp154, Asn158, and Asp161 together coordinate Ca(2+). Positions 161 and 167 each coordinate Mn(2+). Asn269 is a glycosylation site (N-linked (GlcNAc...) asparagine).

Belongs to the leguminous lectin family.

Its function is as follows. Lectin that may be involved in a cell recognition process. This Medicago truncatula (Barrel medic) protein is Lectin 1 (LEC1).